Reading from the N-terminus, the 727-residue chain is Polyphosphate kinase (727 aa).

Position 82 (Asn82) interacts with ATP. Mg(2+) is bound by residues Arg412 and Arg442. His472 acts as the Phosphohistidine intermediate in catalysis. Residues Tyr505, Arg601, and His629 each coordinate ATP.

It belongs to the polyphosphate kinase 1 (PPK1) family. The cofactor is Mg(2+). An intermediate of this reaction is the autophosphorylated ppk in which a phosphate is covalently linked to a histidine residue through a N-P bond.

It catalyses the reaction [phosphate](n) + ATP = [phosphate](n+1) + ADP. In terms of biological role, catalyzes the reversible transfer of the terminal phosphate of ATP to form a long-chain polyphosphate (polyP). The chain is Polyphosphate kinase from Pseudomonas putida (strain ATCC 47054 / DSM 6125 / CFBP 8728 / NCIMB 11950 / KT2440).